We begin with the raw amino-acid sequence, 740 residues long: Ion-translocating oxidoreductase complex subunit C (740 aa).

4Fe-4S ferredoxin-type domains follow at residues 369-397 (GEPQ…QQLY) and 407-436 (KATT…VQYF). 8 residues coordinate [4Fe-4S] cluster: cysteine 377, cysteine 380, cysteine 383, cysteine 387, cysteine 416, cysteine 419, cysteine 422, and cysteine 426. A disordered region spans residues 598–716 (AKARKLEQQQ…EPEEQVDPRK (119 aa)).

It belongs to the 4Fe4S bacterial-type ferredoxin family. RnfC subfamily. The complex is composed of six subunits: RsxA, RsxB, RsxC, RsxD, RsxE and RsxG. [4Fe-4S] cluster is required as a cofactor.

The protein localises to the cell inner membrane. Functionally, part of a membrane-bound complex that couples electron transfer with translocation of ions across the membrane. Required to maintain the reduced state of SoxR. This chain is Ion-translocating oxidoreductase complex subunit C, found in Shigella flexneri serotype 5b (strain 8401).